The sequence spans 344 residues: tRNA N6-adenosine threonylcarbamoyltransferase (344 aa).

Histidine 114 and histidine 118 together coordinate Fe cation. Substrate-binding positions include 136–140, aspartate 170, glycine 183, aspartate 187, and asparagine 278; that span reads LVSGG. Aspartate 306 lines the Fe cation pocket. A disordered region spans residues 325 to 344; it reads PSPLDVPSDPGLPVMQGQVR.

This sequence belongs to the KAE1 / TsaD family. Requires Fe(2+) as cofactor.

The protein resides in the cytoplasm. The catalysed reaction is L-threonylcarbamoyladenylate + adenosine(37) in tRNA = N(6)-L-threonylcarbamoyladenosine(37) in tRNA + AMP + H(+). Required for the formation of a threonylcarbamoyl group on adenosine at position 37 (t(6)A37) in tRNAs that read codons beginning with adenine. Is involved in the transfer of the threonylcarbamoyl moiety of threonylcarbamoyl-AMP (TC-AMP) to the N6 group of A37, together with TsaE and TsaB. TsaD likely plays a direct catalytic role in this reaction. The polypeptide is tRNA N6-adenosine threonylcarbamoyltransferase (Mycobacterium tuberculosis (strain ATCC 25177 / H37Ra)).